The primary structure comprises 189 residues: Peptidyl-tRNA hydrolase (189 aa).

Tyrosine 15 contributes to the tRNA binding site. Histidine 20 serves as the catalytic Proton acceptor. Residues phenylalanine 66, asparagine 68, and asparagine 114 each coordinate tRNA.

This sequence belongs to the PTH family. Monomer.

Its subcellular location is the cytoplasm. The catalysed reaction is an N-acyl-L-alpha-aminoacyl-tRNA + H2O = an N-acyl-L-amino acid + a tRNA + H(+). Hydrolyzes ribosome-free peptidyl-tRNAs (with 1 or more amino acids incorporated), which drop off the ribosome during protein synthesis, or as a result of ribosome stalling. In terms of biological role, catalyzes the release of premature peptidyl moieties from peptidyl-tRNA molecules trapped in stalled 50S ribosomal subunits, and thus maintains levels of free tRNAs and 50S ribosomes. In Streptococcus pneumoniae (strain CGSP14), this protein is Peptidyl-tRNA hydrolase.